Reading from the N-terminus, the 58-residue chain is MSKFEVYLDEGGKYRFRLRARNGQIIAVSQGYKSEEGCIKGIQSVKENAPNARIIVLE.

This sequence belongs to the UPF0339 family.

This is UPF0339 protein MA_3316 from Methanosarcina acetivorans (strain ATCC 35395 / DSM 2834 / JCM 12185 / C2A).